The chain runs to 206 residues: MLSLFRIIIHVCCLGPVAWLAWVLLSGDESQLGADPIKEIQHFLGFSALTILLIMFILGKVFYLLKQPQLQVLRRALGLWAWFYVVLHVYAYLALELGYDFSLFVQELVNRGYLIIGAIAFLILTLMALSSWSYLKLKMGKWWFYLHQLGYYALLLGAIHYVWSVKNVTFSSMLYLILSIMILCDALYGLFIKRKGRSTSAHTGKD.

A run of 6 helical transmembrane segments spans residues 7-27, 43-63, 77-97, 112-132, 142-162, and 172-192; these read IIIHVCCLGPVAWLAWVLLSG, FLGFSALTILLIMFILGKVFY, LGLWAWFYVVLHVYAYLALEL, GYLIIGAIAFLILTLMALSSW, WWFYLHQLGYYALLLGAIHYV, and SMLYLILSIMILCDALYGLFI.

It belongs to the MsrQ family. In terms of assembly, heterodimer of a catalytic subunit (MsrP) and a heme-binding subunit (MsrQ). Requires FMN as cofactor. It depends on heme b as a cofactor.

The protein resides in the cell inner membrane. Its function is as follows. Part of the MsrPQ system that repairs oxidized periplasmic proteins containing methionine sulfoxide residues (Met-O), using respiratory chain electrons. Thus protects these proteins from oxidative-stress damage caused by reactive species of oxygen and chlorine generated by the host defense mechanisms. MsrPQ is essential for the maintenance of envelope integrity under bleach stress, rescuing a wide series of structurally unrelated periplasmic proteins from methionine oxidation. MsrQ provides electrons for reduction to the reductase catalytic subunit MsrP, using the quinone pool of the respiratory chain. The sequence is that of Protein-methionine-sulfoxide reductase heme-binding subunit MsrQ from Pasteurella multocida (strain Pm70).